The primary structure comprises 307 residues: Agmatinase (307 aa).

Positions 128, 151, 153, 155, 232, and 234 each coordinate Mn(2+).

Belongs to the arginase family. Agmatinase subfamily. Mn(2+) serves as cofactor.

It catalyses the reaction agmatine + H2O = urea + putrescine. It functions in the pathway amine and polyamine biosynthesis; putrescine biosynthesis via agmatine pathway; putrescine from agmatine: step 1/1. Its function is as follows. Catalyzes the formation of putrescine from agmatine. In Photorhabdus laumondii subsp. laumondii (strain DSM 15139 / CIP 105565 / TT01) (Photorhabdus luminescens subsp. laumondii), this protein is Agmatinase.